Here is a 258-residue protein sequence, read N- to C-terminus: MKRILITNDDGFESLGLRALIEALRDIAQLTIVVPANEKSACGHSLTLTKPLRFVEIEDNFYKLEDGTPTDCVYLALSSLYPDGEKPDIIVSGINRGANMGEDITYSGTVAGAMEGAIYDIPSIAISQVCNSNCEETEMEVGYEQAKYVARDLVEKIFQQGWPAGHRRCLNVNVPPTKEFKGYKITRAGYRVYFNQAHLHRNPRGIEYWWLGLHPLDWIPGKERDCDFEAVKEGFVSITPIKADLTAYEEIPKLKSWL.

Positions 9, 10, 40, and 95 each coordinate a divalent metal cation.

This sequence belongs to the SurE nucleotidase family. A divalent metal cation serves as cofactor.

It localises to the cytoplasm. It catalyses the reaction a ribonucleoside 5'-phosphate + H2O = a ribonucleoside + phosphate. Nucleotidase that shows phosphatase activity on nucleoside 5'-monophosphates. The chain is 5'-nucleotidase SurE from Nitratiruptor sp. (strain SB155-2).